We begin with the raw amino-acid sequence, 179 residues long: Large ribosomal subunit protein uL6 (179 aa).

It belongs to the universal ribosomal protein uL6 family. Part of the 50S ribosomal subunit.

In terms of biological role, this protein binds to the 23S rRNA, and is important in its secondary structure. It is located near the subunit interface in the base of the L7/L12 stalk, and near the tRNA binding site of the peptidyltransferase center. The protein is Large ribosomal subunit protein uL6 of Chloroherpeton thalassium (strain ATCC 35110 / GB-78).